The sequence spans 1032 residues: Connector enhancer of kinase suppressor of ras 2 (1032 aa).

Positions 11–76 (WSPSQVVDWM…LEAVDLLCAL (66 aa)) constitute an SAM domain. The residue at position 12 (Ser-12) is a Phosphoserine. Residues 84 to 178 (NLKTLSHKLN…TIVQQDCTVY (95 aa)) form the CRIC domain. Residues 215 to 297 (VIQLANIKPS…GVILTLKKRP (83 aa)) form the PDZ domain. The 214-residue stretch at 302 to 515 (TSAPALLKNM…PAHYSLLPSL (214 aa)) folds into the DUF1170 domain. Residues 324–340 (RSPTSSVATPSSTISTP) show a composition bias toward low complexity. Residues 324 to 349 (RSPTSSVATPSSTISTPTKRDSSALQ) are disordered. A phosphoserine mark is found at Ser-338 and Ser-390. 2 disordered regions span residues 480-509 (EEYM…PAHY) and 538-558 (FQQS…ISGK). Residues 545 to 558 (HKSKKKNKGAISGK) are compositionally biased toward basic residues. In terms of domain architecture, PH spans 570 to 669 (RGDCEGWLWK…WLNRINMLTA (100 aa)). Residues 682–766 (DYWSESDKEE…PIRKTASQRR (85 aa)) are disordered. Tyr-683 carries the phosphotyrosine modification. Residues 683-693 (YWSESDKEEAD) are compositionally biased toward acidic residues. Phosphoserine is present on residues Ser-685 and Ser-687. Over residues 701–714 (DSPPPPYDTYPRPP) the composition is skewed to pro residues. The span at 730–740 (LSSTETSQSQS) shows a compositional bias: low complexity. Phosphoserine occurs at positions 756 and 767. Positions 864 to 900 (ACDPQDDIQPPEVEEEEEEEEEEAAGENVGEKNENRE) are disordered. Residues 874–917 (PEVEEEEEEEEEEAAGENVGEKNENREEKLGDSLQDLYRALEEA) adopt a coiled-coil conformation. Positions 875 to 888 (EVEEEEEEEEEEAA) are enriched in acidic residues. Residue Ser-906 is modified to Phosphoserine.

This sequence belongs to the CNKSR family. As to quaternary structure, interacts with RAF1, RAB2L and RAL GTPase proteins. Phosphorylated on tyrosine.

The protein localises to the cytoplasm. It is found in the membrane. In terms of biological role, may function as an adapter protein or regulator of Ras signaling pathways. In Mus musculus (Mouse), this protein is Connector enhancer of kinase suppressor of ras 2 (Cnksr2).